Reading from the N-terminus, the 200-residue chain is Small ribosomal subunit protein uS4 (200 aa).

Residues 92 to 155 form the S4 RNA-binding domain; the sequence is SRLDAVVYQL…QKLNIIAESV (64 aa).

It belongs to the universal ribosomal protein uS4 family. As to quaternary structure, part of the 30S ribosomal subunit. Contacts protein S5. The interaction surface between S4 and S5 is involved in control of translational fidelity.

One of the primary rRNA binding proteins, it binds directly to 16S rRNA where it nucleates assembly of the body of the 30S subunit. Functionally, with S5 and S12 plays an important role in translational accuracy. This is Small ribosomal subunit protein uS4 from Macrococcus caseolyticus (strain JCSC5402) (Macrococcoides caseolyticum).